The sequence spans 364 residues: Geissoschizine synthase (364 aa).

Positions 24-343 constitute an Enoyl reductase (ER) domain; sequence GILHPIKFSR…DYLSTAMERI (320 aa). A Zn(2+)-binding site is contributed by C51. NADP(+) is bound at residue N52. Zn(2+) contacts are provided by H73, E74, C104, C107, C110, C118, and C168. NADP(+) contacts are provided by L194, G196, L197, S216, T217, S218, K221, R261, V280, A282, S304, T306, and R351.

It belongs to the zinc-containing alcohol dehydrogenase family. Class-III subfamily. In terms of assembly, homodimer. The cofactor is Zn(2+).

It catalyses the reaction (19E)-geissoschizine + NADP(+) = 4,21-dehydrogeissoschizine + NADPH. The catalysed reaction is (19E)-geissoschizine + NADPH + H(+) = (16R,19E)-isositsirikine + NADP(+). The enzyme catalyses (19E)-geissoschizine + NADPH + H(+) = (16R,19Z)-isositsirikine + NADP(+). It functions in the pathway alkaloid biosynthesis. In terms of biological role, an alcohol dehydrogenase involved in the biosynthesis of seco-iridoid and derivatives monoterpenoid indole alkaloids natural products. Catalyzes the production of geissoschizine and its conversion to (16R)-E-isositsirikine and (16R)-Z-isositsirikine. This chain is Geissoschizine synthase, found in Alstonia scholaris (Dogbane).